A 266-amino-acid chain; its full sequence is Phosphate import ATP-binding protein PstB 1 (266 aa).

An ABC transporter domain is found at 21-261 (ISTQDLSVFY…PKGEITEDYI (241 aa)). An ATP-binding site is contributed by 54–61 (GGSGSGKS).

This sequence belongs to the ABC transporter superfamily. Phosphate importer (TC 3.A.1.7) family. The complex is composed of two ATP-binding proteins (PstB), two transmembrane proteins (PstC and PstA) and a solute-binding protein (PstS).

The protein localises to the cell membrane. The catalysed reaction is phosphate(out) + ATP + H2O = ADP + 2 phosphate(in) + H(+). In terms of biological role, part of the ABC transporter complex PstSACB involved in phosphate import. Responsible for energy coupling to the transport system. The sequence is that of Phosphate import ATP-binding protein PstB 1 from Lactobacillus johnsonii (strain CNCM I-12250 / La1 / NCC 533).